A 181-amino-acid chain; its full sequence is Squamosa promoter-binding-like protein 5 (181 aa).

Residues 1–10 (MEGQRTQRRG) show a composition bias toward basic residues. The segment at 1–58 (MEGQRTQRRGYLKDKATVSNLVEEEMENGMDGEEEDGGDEDKRKKVMERVRGPSTDRV) is disordered. Positions 22–39 (VEEEMENGMDGEEEDGGD) are enriched in acidic residues. Residues 40 to 51 (EDKRKKVMERVR) are compositionally biased toward basic and acidic residues. The SBP-type zinc finger occupies 60 to 137 (SRLCQVDRCT…AGHNERRRKI (78 aa)). Zn(2+) contacts are provided by Cys-63, Cys-68, Cys-85, His-88, Cys-104, Cys-107, His-111, and Cys-123. The Bipartite nuclear localization signal signature appears at 120–136 (KRSCRRRLAGHNERRRK). Residues 128–181 (AGHNERRRKISGDSFGEGSGRRGFSGQLIQTQERNRVDRKLPMTNSSFKRPQIR) form a disordered region. Polar residues predominate over residues 170–181 (MTNSSFKRPQIR).

The cofactor is Zn(2+). As to expression, expressed in the inflorescence apical meristem and young flowers.

The protein resides in the nucleus. Its subcellular location is the cytoplasm. In terms of biological role, trans-acting factor that binds specifically to the consensus nucleotide sequence 5'-TNCGTACAA-3' of AP1 promoter. Promotes both vegetative phase change and flowering. This chain is Squamosa promoter-binding-like protein 5 (SPL5), found in Arabidopsis thaliana (Mouse-ear cress).